A 553-amino-acid chain; its full sequence is MNIIDQVKQTLVEEIAASINKAGLADEIPDIKIEVPKDTKNGDYATNIAMVLTKIAKRNPREIAQAIVDNLDTEKAHVKQIDIAGPGFINFYLDNQYLTAIIPEAIEKGDQFGHVNESKGQNVLLEYVSANPTGDLHIGHARNAAVGDALANILTAAGYNVTREYYINDAGNQITNLARSIETRFFEALGDNSYSMPEDGYNGKDIIEIGKDLAEKHPEIKDYSEEARLKEFRKLGVEYEMAKLKNDLAEFNTHFDNWFSETSLYEKGEILEVLAKMKELGYTYEADGATWLRTTDFKDDKDRVLIKNDGTYTYFLPDIAYHFDKVKRGNDILIDLFGADHHGYINRLKASLETFGVDSNRLEIQIMQMVRLMENGKEVKMSKRTGNAITLREIMDEVGVDAARYFLTMRSPDSHFDFDMELAKEQSQDNPVYYAQYAHARICSILKQAKEQGIEVTAANDFTTITNEKAIELLKKVADFEPTIESAAEHRSAHRITNYIQDLAAHFHKFYNAEKVLTDDIEKTKAHVAMIEAVRITLKNALAMVGVSAPESM.

A 'HIGH' region motif is present at residues 132-140 (PTGDLHIGH).

The protein belongs to the class-I aminoacyl-tRNA synthetase family. In terms of assembly, monomer.

It is found in the cytoplasm. The catalysed reaction is tRNA(Arg) + L-arginine + ATP = L-arginyl-tRNA(Arg) + AMP + diphosphate. The chain is Arginine--tRNA ligase from Staphylococcus aureus (strain N315).